Reading from the N-terminus, the 465-residue chain is MKIYNTLTKTKEEFIPREPGKVYMYVCGPTTYNYIHIGNARPIVFFDTVRRYFEYKGFEVIYVQNFTDIDDKIINRALEEGISPIELGQKYIIEYFKDADRLGVKRATVHPKVTEHIPEIIEMVKGLIEKGYAYEVEGNVYFAVDSFSDYGKLSGRDLEELKAGARVEVDEKKKNPLDFALWKKAKPGEPYWESPWGPGRPGWHIECSAMSLKYLGENFDIHGGGADLVFPHHENEVAQSEAFTGKPFARYWMHNGFITVNQEKMSKSLGNFFLVREILEKFPGRVVRFFLLSTHYRSPLDFDDKKLNEAKAALERVDNFVQNLKEVNPLPGEARIEIQEKITNFLRDFNEAMEDDFNTAQAMASLFELVRFGNTQIASGNLTAGDKKLFEEALNVYTQVFGIEFGVLEKIAGEDITPFVELLIEVRARLKKEKKYDLADFIRDELKKQGIILEDTPKGVRWKRV.

Residue Cys27 participates in Zn(2+) binding. The short motif at 29-39 is the 'HIGH' region element; that stretch reads PTTYNYIHIGN. Zn(2+)-binding residues include Cys207, His232, and Glu236. Positions 264 to 268 match the 'KMSKS' region motif; that stretch reads KMSKS. Position 267 (Lys267) interacts with ATP.

The protein belongs to the class-I aminoacyl-tRNA synthetase family. In terms of assembly, monomer. The cofactor is Zn(2+).

It localises to the cytoplasm. It catalyses the reaction tRNA(Cys) + L-cysteine + ATP = L-cysteinyl-tRNA(Cys) + AMP + diphosphate. The protein is Cysteine--tRNA ligase of Carboxydothermus hydrogenoformans (strain ATCC BAA-161 / DSM 6008 / Z-2901).